A 542-amino-acid polypeptide reads, in one-letter code: Beta-amylase 2, chloroplastic (542 aa).

A chloroplast-targeting transit peptide spans 1 to 55; the sequence is MAIRLNHSVIPVSVKLGAPTRVSARSSLPFSVGDWRGVSTFSGARPLVLAKVKLR. Residues D136, H176, and D184 each contribute to the substrate site. E269 acts as the Proton donor in catalysis. Substrate contacts are provided by K377, H382, and T424. Catalysis depends on E465, which acts as the Proton acceptor. Substrate is bound by residues 466 to 467 and R501; that span reads NA.

This sequence belongs to the glycosyl hydrolase 14 family.

Its subcellular location is the plastid. It localises to the chloroplast. It catalyses the reaction Hydrolysis of (1-&gt;4)-alpha-D-glucosidic linkages in polysaccharides so as to remove successive maltose units from the non-reducing ends of the chains.. Redox regulation; active in reducing conditions, inactive in oxidizing conditions. Low beta-amylase activity. Interacts poorly with starch or other alpha-1,4-glucan. In Arabidopsis thaliana (Mouse-ear cress), this protein is Beta-amylase 2, chloroplastic (BAM2).